The chain runs to 500 residues: Polyenoic fatty acid isomerase (500 aa).

The first 21 residues, 1 to 21 (MSLNRVLHIFLIAYLACTALT), serve as a signal peptide directing secretion.

Homodimer. The cofactor is an oxidized flavin. In terms of processing, glycosylated.

The enzyme catalyses (5Z,8Z,11Z,14Z,17Z)-eicosapentaenoate = (5Z,7E,9E,14Z,17Z)-icosapentaenoate. Its function is as follows. Involved in the biosynthesis of conjugated triene-containing fatty acids. Catalyzes the isomerization of a wide range of substrates containing three or more methylene interrupted olefins into a Z,E,E conjugated triene functionality. May be involved in a stress tolerance mechanism as response to intertidal habitats with direct sunlight, desiccation and high temperature. In vitro substrates include arachidonic acid ((5Z,8Z,11Z,14Z)-eicosatetraenoic acid), EPA ((5Z,8Z, 11Z,14Z,17Z)-eicosapentaenoic acid), DHA ((4Z,7Z,10Z,13Z,16Z,19Z)-docosahexenoic acid), adrenic acid ((7Z,10Z,13Z,16Z)-docosatetraenoic acid), anandamide (arachidonyl-N-ethanolamide) and eicosatrienoic acid ((5Z,8Z,11Z)-eicosatrienoic acid). Gamma-linolenic acid (18:3 6Z,9Z,12Z) and dihomo-gamma-linolenic acid (20:3 8Z,11Z,14Z) are transformed into mixtures of conjugated diene and triene fatty acids, linoleic acid is only transformed to a conjugated diene. This Ptilota filicina (Red alga) protein is Polyenoic fatty acid isomerase.